Here is a 309-residue protein sequence, read N- to C-terminus: NAD kinase (309 aa).

The active-site Proton acceptor is aspartate 89. NAD(+) is bound by residues 89 to 90 (DG), 163 to 164 (NE), histidine 174, arginine 191, aspartate 193, and 204 to 209 (TAYALS).

It belongs to the NAD kinase family. A divalent metal cation serves as cofactor.

It is found in the cytoplasm. It catalyses the reaction NAD(+) + ATP = ADP + NADP(+) + H(+). Functionally, involved in the regulation of the intracellular balance of NAD and NADP, and is a key enzyme in the biosynthesis of NADP. Catalyzes specifically the phosphorylation on 2'-hydroxyl of the adenosine moiety of NAD to yield NADP. The polypeptide is NAD kinase (Shewanella sp. (strain ANA-3)).